A 239-amino-acid chain; its full sequence is Ribose-5-phosphate isomerase A (239 aa).

Substrate is bound by residues Ser40–Thr43, Asp96–Asp99, and Lys110–Gly113. Glu119 serves as the catalytic Proton acceptor. Substrate is bound at residue Lys137.

This sequence belongs to the ribose 5-phosphate isomerase family. As to quaternary structure, homodimer.

The enzyme catalyses aldehydo-D-ribose 5-phosphate = D-ribulose 5-phosphate. Its pathway is carbohydrate degradation; pentose phosphate pathway; D-ribose 5-phosphate from D-ribulose 5-phosphate (non-oxidative stage): step 1/1. Its function is as follows. Catalyzes the reversible conversion of ribose-5-phosphate to ribulose 5-phosphate. This is Ribose-5-phosphate isomerase A from Methanococcus vannielii (strain ATCC 35089 / DSM 1224 / JCM 13029 / OCM 148 / SB).